The primary structure comprises 149 residues: Transcriptional repressor NrdR (149 aa).

A zinc finger lies at 3-34; it reads CPFCSATDTKVIDSRLVADGHQVRRRRECVQC. Positions 49-139 constitute an ATP-cone domain; sequence PRVVKQDGSR…VYRAFEDVSE (91 aa).

This sequence belongs to the NrdR family. Zn(2+) is required as a cofactor.

Negatively regulates transcription of bacterial ribonucleotide reductase nrd genes and operons by binding to NrdR-boxes. This is Transcriptional repressor NrdR from Shewanella piezotolerans (strain WP3 / JCM 13877).